The primary structure comprises 224 residues: ATP-dependent dethiobiotin synthetase BioD (224 aa).

Residue 14–19 (GIGKTV) participates in ATP binding. Residue threonine 18 coordinates Mg(2+). Lysine 39 is a catalytic residue. A substrate-binding site is contributed by serine 43. Residues aspartate 56, 117–120 (EGVG), and 177–178 (NE) each bind ATP. Aspartate 56 and glutamate 117 together coordinate Mg(2+).

This sequence belongs to the dethiobiotin synthetase family. Homodimer. Mg(2+) is required as a cofactor.

It localises to the cytoplasm. It carries out the reaction (7R,8S)-7,8-diammoniononanoate + CO2 + ATP = (4R,5S)-dethiobiotin + ADP + phosphate + 3 H(+). It participates in cofactor biosynthesis; biotin biosynthesis; biotin from 7,8-diaminononanoate: step 1/2. In terms of biological role, catalyzes a mechanistically unusual reaction, the ATP-dependent insertion of CO2 between the N7 and N8 nitrogen atoms of 7,8-diaminopelargonic acid (DAPA, also called 7,8-diammoniononanoate) to form a ureido ring. This Xanthomonas campestris pv. campestris (strain ATCC 33913 / DSM 3586 / NCPPB 528 / LMG 568 / P 25) protein is ATP-dependent dethiobiotin synthetase BioD.